A 438-amino-acid polypeptide reads, in one-letter code: MHKVAIVGRPNVGKSSLFNRLIGRREAVVADFPGVTRDAKEGLMLYHNHRITLIDTGGLWSGDEWEQAIREKAEWAMEGAQAVIFVLDPREGLSAADYEVADWLRRLGKPVIVTANKIDSQKHEPYLAELWGLGFGDPVAISAEHARGLDDLMDRVMKYLPEDDEDVPDIAPIRISLIGRPNVGKSSLLNAITQSDRAIVADLPGTTRDSLDVEWDYGGQRFVLVDTAGIRKKPDTAIEDFAIQRSQAAIERSDVIWLVVNATDIGDHELKLANLAYDSGKPVIVVVNKWDLVPDAELKSTEKDLNQKLHHISFAPRVYTSAINDYGIHDMLAEAMKLYEKWQSRIGTSELNRWLEVWQMKQRVPNFHGKPLRMYFMTQVETAPPTFAIFCNRADFVTRAYEGFLQNRIREDLELAGVPVRLKWKEKGPYKKGEADED.

EngA-type G domains lie at 2–164 (HKVA…PEDD) and 173–343 (IRIS…EKWQ). GTP-binding positions include 8-15 (GRPNVGKS), 55-59 (DTGGL), 116-119 (NKID), 179-186 (GRPNVGKS), 226-230 (DTAGI), and 288-291 (NKWD). A KH-like domain is found at 344-428 (SRIGTSELNR…PVRLKWKEKG (85 aa)).

This sequence belongs to the TRAFAC class TrmE-Era-EngA-EngB-Septin-like GTPase superfamily. EngA (Der) GTPase family. In terms of assembly, associates with the 50S ribosomal subunit.

In terms of biological role, GTPase that plays an essential role in the late steps of ribosome biogenesis. This Deinococcus radiodurans (strain ATCC 13939 / DSM 20539 / JCM 16871 / CCUG 27074 / LMG 4051 / NBRC 15346 / NCIMB 9279 / VKM B-1422 / R1) protein is GTPase Der.